Here is a 1047-residue protein sequence, read N- to C-terminus: Rab11 family-interacting protein 3 (1047 aa).

Disordered stretches follow at residues 1-107, 311-335, and 475-496; these read MELC…WPQE, SHSCPQEADTGCLSAKEPEEPDVSH, and PGPPSDPGPALSLPSEPGTAQE. Residues 64–73 are compositionally biased toward basic and acidic residues; the sequence is EPHAPSRWAK. 2 EF-hand domains span residues 496–531 and 528–563; these read EEGARLRAVFDALDRDGDGFVRIEDFIQFATVYGAE and YGAEQVKDLTQYLDPSGLGVISFEDFYQGIVAIRNG. 7 residues coordinate Ca(2+): Asp-509, Asp-511, Asp-513, Asp-520, Asp-541, Ser-543, and Asp-552. Phosphoserine is present on residues Ser-641, Ser-765, and Ser-829. A coiled-coil region spans residues 750-985; sequence EEDIADKVIF…NGQIITLSIQ (236 aa). Residues 775–879 form an ARF-binding domain (ABD) region; the sequence is GEQHGRLRQE…MLDEIEELTQ (105 aa). The tract at residues 882 to 906 is disordered; the sequence is SEEQENKRKMGDRLSHERHQFQRDK. 2 positions are modified to phosphoserine: Ser-938 and Ser-939. In terms of domain architecture, FIP-RBD spans 985–1047; the sequence is QGAKSLFSTS…ETNPSILEVK (63 aa).

In terms of assembly, homodimer. Interacts with RAB11A; the interaction is direct and is required for the recruitment to endosomes. Interacts with RAB11B. Forms a ternary complex with RAB11A and dynein intermediate chain DYNC1LI1; RAB11FIP3 links RAB11A to dynein and the interaction regulates endocytic trafficking. Interacts with dynein intermediate chain and dynactin (DCTN1); the interaction activates dynein processivity. Interacts with ARF6 and EXOC7; the interaction serves for recruitment and tethering of recycling endosomes-derived vesicles to the cleavage furrow/midbody. Interacts with RACGAP1/MgcRacGAP; the interaction occurs at late telophase and is required for recruitment and tethering of recycling endosomes-derived vesicles to the cleavage furrow/midbody. Forms a complex with RAB11A and Rabin8/RAB3IP, probably a heterohexamer with two of each protein subunit, where RAB3IP and RAB11FIP3 simultaneously bind to RAB11A; the complex promotes preciliary trafficking. Forms a complex containing RAB11A, ASAP1, RAB3IP, RAP11FIP3 and ARF4; the complex promotes preciliary trafficking; the complex binds to RHO in photoreceptor cells and promotes RHO ciliary transport. Interacts with RAB11FIP4. Interacts with RAB25.

It localises to the recycling endosome membrane. It is found in the cytoplasm. Its subcellular location is the cytoskeleton. The protein resides in the microtubule organizing center. The protein localises to the centrosome. It localises to the cleavage furrow. It is found in the midbody. Its subcellular location is the golgi apparatus membrane. The protein resides in the golgi apparatus. The protein localises to the trans-Golgi network membrane. Downstream effector molecule for Rab11 GTPase which is involved in endocytic trafficking, cytokinesis and intracellular ciliogenesis by participating in membrane delivery. Recruited by Rab11 to endosomes where it links Rab11 to dynein motor complex. The functional Rab11-RAB11FIP3-dynein complex regulates the movement of peripheral sorting endosomes (SE) along microtubule tracks toward the microtubule organizing center/centrosome, generating the endocytic recycling compartment (ERC) during interphase of cell cycle. Facilitates the interaction between dynein and dynactin and activates dynein processivity. Binding with ASAP1 is needed to regulate the pericentrosomal localization of recycling endosomes. The Rab11-RAB11FIP3 complex is also implicated in the transport during telophase of vesicles derived from recycling endosomes to the cleavage furrow via centrosome-anchored microtubules, where the vesicles function to deliver membrane during late cytokinesis and abscission. The recruitment of Rab11-RAB11FIP3-containing endosomes to the cleavage furrow and tethering to the midbody is co-mediated by RAB11FIP3 interaction with ARF6-exocyst and RACGAP1-MKLP1 tethering complexes. Also involved in the Rab11-Rabin8-Rab8 ciliogenesis cascade by facilitating the orderly assembly of a ciliary targeting complex containing Rab11, ASAP1, Rabin8/RAB3IP, RAB11FIP3 and ARF4, which directs preciliary vesicle trafficking to mother centriole and ciliogenesis initiation. Also promotes the activity of Rab11 and ASAP1 in the ARF4-dependent Golgi-to-cilia transport of the sensory receptor rhodopsin. Competes with WDR44 for binding to Rab11, which controls intracellular ciliogenesis pathway. May play a role in breast cancer cell motility by regulating actin cytoskeleton. This chain is Rab11 family-interacting protein 3, found in Mus musculus (Mouse).